Consider the following 234-residue polypeptide: tRNA (guanine-N(1)-)-methyltransferase (234 aa).

Residues G110 and 134 to 139 each bind S-adenosyl-L-methionine; that span reads IGDYVL.

This sequence belongs to the RNA methyltransferase TrmD family. Homodimer.

The protein localises to the cytoplasm. The enzyme catalyses guanosine(37) in tRNA + S-adenosyl-L-methionine = N(1)-methylguanosine(37) in tRNA + S-adenosyl-L-homocysteine + H(+). Its function is as follows. Specifically methylates guanosine-37 in various tRNAs. The sequence is that of tRNA (guanine-N(1)-)-methyltransferase from Tropheryma whipplei (strain Twist) (Whipple's bacillus).